The following is a 946-amino-acid chain: Probable outer membrane protein pmp18 (946 aa).

The N-terminal stretch at 1 to 16 (MQNNRSLSKSSFFVGA) is a signal peptide. Residues 668–946 (QGQIAPTASG…YLHAGTTFKF (279 aa)) form the Autotransporter domain.

The protein belongs to the PMP outer membrane protein family.

It localises to the secreted. Its subcellular location is the cell wall. The protein resides in the cell outer membrane. This Chlamydia pneumoniae (Chlamydophila pneumoniae) protein is Probable outer membrane protein pmp18 (pmp18).